Reading from the N-terminus, the 1175-residue chain is uncharacterized protein (1175 aa).

An ATP-binding site is contributed by 586 to 593; that stretch reads GPAGTGKT.

This is an uncharacterized protein from Methanocaldococcus jannaschii (strain ATCC 43067 / DSM 2661 / JAL-1 / JCM 10045 / NBRC 100440) (Methanococcus jannaschii).